We begin with the raw amino-acid sequence, 175 residues long: uncharacterized protein (175 aa).

The span at 1–14 shows a compositional bias: polar residues; it reads MNTSSRIQLPSSND. 2 disordered regions span residues 1–31 and 127–175; these read MNTS…SKRS and ARSR…QSKR. The segment covering 16-27 has biased composition (basic and acidic residues); the sequence is HVYDGRSNEPKA. A compositionally biased stretch (low complexity) spans 130–149; that stretch reads RASSVSNSRLNSRTNSSVSL. Positions 154–175 are enriched in polar residues; it reads GSSSWKNKIKNAVSNVTDQSKR.

Its subcellular location is the cytoplasm. It is found in the nucleus. This is an uncharacterized protein from Schizosaccharomyces pombe (strain 972 / ATCC 24843) (Fission yeast).